Here is a 301-residue protein sequence, read N- to C-terminus: Probable alpha-L-glutamate ligase (301 aa).

The region spanning 104–287 is the ATP-grasp domain; that stretch reads LQLLSRKGIG…VADEIIRFIE (184 aa). Residues Lys-141, 178–179, Asp-187, and 211–213 each bind ATP; these read EF and RSN. Positions 248, 260, and 262 each coordinate Mg(2+). Mn(2+) is bound by residues Asp-248, Glu-260, and Asn-262.

The protein belongs to the RimK family. It depends on Mg(2+) as a cofactor. Mn(2+) is required as a cofactor.

This Syntrophotalea carbinolica (strain DSM 2380 / NBRC 103641 / GraBd1) (Pelobacter carbinolicus) protein is Probable alpha-L-glutamate ligase.